The sequence spans 218 residues: Probable transaldolase (218 aa).

Catalysis depends on K84, which acts as the Schiff-base intermediate with substrate.

It belongs to the transaldolase family. Type 3B subfamily.

It is found in the cytoplasm. It catalyses the reaction D-sedoheptulose 7-phosphate + D-glyceraldehyde 3-phosphate = D-erythrose 4-phosphate + beta-D-fructose 6-phosphate. The protein operates within carbohydrate degradation; pentose phosphate pathway; D-glyceraldehyde 3-phosphate and beta-D-fructose 6-phosphate from D-ribose 5-phosphate and D-xylulose 5-phosphate (non-oxidative stage): step 2/3. Transaldolase is important for the balance of metabolites in the pentose-phosphate pathway. This is Probable transaldolase from Sulfurihydrogenibium sp. (strain YO3AOP1).